We begin with the raw amino-acid sequence, 304 residues long: NADH-cytochrome b5 reductase 2 (304 aa).

Residues 9–29 traverse the membrane as a helical segment; sequence MLVALAVIGVTVLLFLIKALG. An FAD-binding FR-type domain is found at 43–155; the sequence is NAKYPLPLIE…RGPNGLLVYK (113 aa). Residues 135–150 and 174–209 contribute to the FAD site; these read DSLK…GPNG and VAKH…KCSL.

Belongs to the flavoprotein pyridine nucleotide cytochrome reductase family. The cofactor is FAD.

It localises to the membrane. The catalysed reaction is 2 Fe(III)-[cytochrome b5] + NADH = 2 Fe(II)-[cytochrome b5] + NAD(+) + H(+). In terms of biological role, NADH-cytochrome b5 reductases are involved in desaturation and elongation of fatty acids, cholesterol biosynthesis and drug metabolism. This is NADH-cytochrome b5 reductase 2 (cyb5r2) from Xenopus tropicalis (Western clawed frog).